A 593-amino-acid polypeptide reads, in one-letter code: Dihydroxy-acid dehydratase (593 aa).

Residues 1–17 show a composition bias toward acidic residues; sequence MSQQTEPDDDAALDGDE. A disordered region spans residues 1 to 40; sequence MSQQTEPDDDAALDGDEPGAYGKDERLRSREVTEGPERAP. Residues 22 to 40 show a composition bias toward basic and acidic residues; sequence GKDERLRSREVTEGPERAP. [2Fe-2S] cluster is bound at residue Cys-72. Residue Asp-104 coordinates Mg(2+). Cys-145 lines the [2Fe-2S] cluster pocket. Positions 146 and 147 each coordinate Mg(2+). Lys-147 is modified (N6-carboxylysine). Cys-217 is a binding site for [2Fe-2S] cluster. Glu-475 contacts Mg(2+). Ser-501 serves as the catalytic Proton acceptor.

This sequence belongs to the IlvD/Edd family. As to quaternary structure, homodimer. [2Fe-2S] cluster serves as cofactor. The cofactor is Mg(2+).

The catalysed reaction is (2R)-2,3-dihydroxy-3-methylbutanoate = 3-methyl-2-oxobutanoate + H2O. The enzyme catalyses (2R,3R)-2,3-dihydroxy-3-methylpentanoate = (S)-3-methyl-2-oxopentanoate + H2O. It functions in the pathway amino-acid biosynthesis; L-isoleucine biosynthesis; L-isoleucine from 2-oxobutanoate: step 3/4. It participates in amino-acid biosynthesis; L-valine biosynthesis; L-valine from pyruvate: step 3/4. Its function is as follows. Functions in the biosynthesis of branched-chain amino acids. Catalyzes the dehydration of (2R,3R)-2,3-dihydroxy-3-methylpentanoate (2,3-dihydroxy-3-methylvalerate) into 2-oxo-3-methylpentanoate (2-oxo-3-methylvalerate) and of (2R)-2,3-dihydroxy-3-methylbutanoate (2,3-dihydroxyisovalerate) into 2-oxo-3-methylbutanoate (2-oxoisovalerate), the penultimate precursor to L-isoleucine and L-valine, respectively. This Natronomonas pharaonis (strain ATCC 35678 / DSM 2160 / CIP 103997 / JCM 8858 / NBRC 14720 / NCIMB 2260 / Gabara) (Halobacterium pharaonis) protein is Dihydroxy-acid dehydratase.